Reading from the N-terminus, the 879-residue chain is Phosphoenolpyruvate carboxylase (879 aa).

Residues histidine 138 and lysine 545 contribute to the active site.

The protein belongs to the PEPCase type 1 family. The cofactor is Mg(2+).

It carries out the reaction oxaloacetate + phosphate = phosphoenolpyruvate + hydrogencarbonate. Forms oxaloacetate, a four-carbon dicarboxylic acid source for the tricarboxylic acid cycle. This chain is Phosphoenolpyruvate carboxylase, found in Haemophilus influenzae (strain PittEE).